The primary structure comprises 222 residues: Protein GrpE (222 aa).

The segment at 1–21 is disordered; that stretch reads MSDEKNKFTDASFENCDLKNP.

Belongs to the GrpE family. Homodimer.

It is found in the cytoplasm. Participates actively in the response to hyperosmotic and heat shock by preventing the aggregation of stress-denatured proteins, in association with DnaK and GrpE. It is the nucleotide exchange factor for DnaK and may function as a thermosensor. Unfolded proteins bind initially to DnaJ; upon interaction with the DnaJ-bound protein, DnaK hydrolyzes its bound ATP, resulting in the formation of a stable complex. GrpE releases ADP from DnaK; ATP binding to DnaK triggers the release of the substrate protein, thus completing the reaction cycle. Several rounds of ATP-dependent interactions between DnaJ, DnaK and GrpE are required for fully efficient folding. The chain is Protein GrpE from Bartonella tribocorum (strain CIP 105476 / IBS 506).